The following is a 190-amino-acid chain: Crossover junction endodeoxyribonuclease RuvC (190 aa).

Residues D8, E67, and D139 contribute to the active site. D8, E67, and D139 together coordinate Mg(2+).

The protein belongs to the RuvC family. Homodimer which binds Holliday junction (HJ) DNA. The HJ becomes 2-fold symmetrical on binding to RuvC with unstacked arms; it has a different conformation from HJ DNA in complex with RuvA. In the full resolvosome a probable DNA-RuvA(4)-RuvB(12)-RuvC(2) complex forms which resolves the HJ. It depends on Mg(2+) as a cofactor.

It localises to the cytoplasm. The catalysed reaction is Endonucleolytic cleavage at a junction such as a reciprocal single-stranded crossover between two homologous DNA duplexes (Holliday junction).. In terms of biological role, the RuvA-RuvB-RuvC complex processes Holliday junction (HJ) DNA during genetic recombination and DNA repair. Endonuclease that resolves HJ intermediates. Cleaves cruciform DNA by making single-stranded nicks across the HJ at symmetrical positions within the homologous arms, yielding a 5'-phosphate and a 3'-hydroxyl group; requires a central core of homology in the junction. The consensus cleavage sequence is 5'-(A/T)TT(C/G)-3'. Cleavage occurs on the 3'-side of the TT dinucleotide at the point of strand exchange. HJ branch migration catalyzed by RuvA-RuvB allows RuvC to scan DNA until it finds its consensus sequence, where it cleaves and resolves the cruciform DNA. The protein is Crossover junction endodeoxyribonuclease RuvC of Haemophilus influenzae (strain ATCC 51907 / DSM 11121 / KW20 / Rd).